Here is a 740-residue protein sequence, read N- to C-terminus: Ethylene receptor 1 (740 aa).

3 helical membrane-spanning segments follow: residues 23 to 43 (ISDF…IYFV), 53 to 73 (WVLV…LINL), and 92 to 112 (VLTA…IPDL). 2 residues coordinate Cu cation: Cys65 and His69. The 150-residue stretch at 158-307 (DRHTILKTTL…VVADQVAVAL (150 aa)) folds into the GAF domain. One can recognise a Histidine kinase domain in the interval 350–588 (VMNHEMRTPM…TFIVKLGIAE (239 aa)). His353 bears the Phosphohistidine; by autocatalysis mark. The Response regulatory domain maps to 614–731 (KVLVMDDNGV…KMRSVLSELI (118 aa)). 4-aspartylphosphate is present on Asp662.

This sequence belongs to the ethylene receptor family. As to quaternary structure, homodimer; disulfide-linked. The cofactor is Cu cation. Activation probably requires a transfer of a phosphate group between a His in the transmitter domain and an Asp of the receiver domain.

The protein localises to the endoplasmic reticulum membrane. The enzyme catalyses ATP + protein L-histidine = ADP + protein N-phospho-L-histidine.. May act early in the ethylene signal transduction pathway, possibly as an ethylene receptor, or as a regulator of the pathway. The chain is Ethylene receptor 1 (ETR1) from Cucumis sativus (Cucumber).